Here is a 335-residue protein sequence, read N- to C-terminus: Holliday junction branch migration complex subunit RuvB (335 aa).

The large ATPase domain (RuvB-L) stretch occupies residues 4-184 (VDRIVSANAK…FGIVQRLEFY (181 aa)). ATP contacts are provided by residues isoleucine 23, arginine 24, glycine 65, lysine 68, threonine 69, threonine 70, 131 to 133 (EDY), arginine 174, tyrosine 184, and arginine 221. A Mg(2+)-binding site is contributed by threonine 69. Residues 185 to 255 (SVEDLASIVT…IAQEALKMLD (71 aa)) form a small ATPAse domain (RuvB-S) region. The segment at 258–335 (LAGFDFMDRK…RHFGLEQIEK (78 aa)) is head domain (RuvB-H). DNA-binding residues include arginine 294, arginine 313, and arginine 318.

It belongs to the RuvB family. As to quaternary structure, homohexamer. Forms an RuvA(8)-RuvB(12)-Holliday junction (HJ) complex. HJ DNA is sandwiched between 2 RuvA tetramers; dsDNA enters through RuvA and exits via RuvB. An RuvB hexamer assembles on each DNA strand where it exits the tetramer. Each RuvB hexamer is contacted by two RuvA subunits (via domain III) on 2 adjacent RuvB subunits; this complex drives branch migration. In the full resolvosome a probable DNA-RuvA(4)-RuvB(12)-RuvC(2) complex forms which resolves the HJ.

The protein resides in the cytoplasm. It catalyses the reaction ATP + H2O = ADP + phosphate + H(+). In terms of biological role, the RuvA-RuvB-RuvC complex processes Holliday junction (HJ) DNA during genetic recombination and DNA repair, while the RuvA-RuvB complex plays an important role in the rescue of blocked DNA replication forks via replication fork reversal (RFR). RuvA specifically binds to HJ cruciform DNA, conferring on it an open structure. The RuvB hexamer acts as an ATP-dependent pump, pulling dsDNA into and through the RuvAB complex. RuvB forms 2 homohexamers on either side of HJ DNA bound by 1 or 2 RuvA tetramers; 4 subunits per hexamer contact DNA at a time. Coordinated motions by a converter formed by DNA-disengaged RuvB subunits stimulates ATP hydrolysis and nucleotide exchange. Immobilization of the converter enables RuvB to convert the ATP-contained energy into a lever motion, pulling 2 nucleotides of DNA out of the RuvA tetramer per ATP hydrolyzed, thus driving DNA branch migration. The RuvB motors rotate together with the DNA substrate, which together with the progressing nucleotide cycle form the mechanistic basis for DNA recombination by continuous HJ branch migration. Branch migration allows RuvC to scan DNA until it finds its consensus sequence, where it cleaves and resolves cruciform DNA. The chain is Holliday junction branch migration complex subunit RuvB from Histophilus somni (strain 129Pt) (Haemophilus somnus).